A 139-amino-acid chain; its full sequence is Small ribosomal subunit protein uS12 (139 aa).

Positions 1–21 (MSTVSQLIKKRRSSKTSKTKA) are disordered. Over residues 8-18 (IKKRRSSKTSK) the composition is skewed to basic residues.

This sequence belongs to the universal ribosomal protein uS12 family. In terms of assembly, part of the 30S ribosomal subunit. Contacts proteins S8 and S17. May interact with IF1 in the 30S initiation complex.

In terms of biological role, with S4 and S5 plays an important role in translational accuracy. Functionally, interacts with and stabilizes bases of the 16S rRNA that are involved in tRNA selection in the A site and with the mRNA backbone. Located at the interface of the 30S and 50S subunits, it traverses the body of the 30S subunit contacting proteins on the other side and probably holding the rRNA structure together. The combined cluster of proteins S8, S12 and S17 appears to hold together the shoulder and platform of the 30S subunit. The protein is Small ribosomal subunit protein uS12 of Onion yellows phytoplasma (strain OY-M).